A 464-amino-acid polypeptide reads, in one-letter code: V-type ATP synthase beta chain (464 aa).

This sequence belongs to the ATPase alpha/beta chains family.

Functionally, produces ATP from ADP in the presence of a proton gradient across the membrane. The V-type beta chain is a regulatory subunit. The polypeptide is V-type ATP synthase beta chain (Streptococcus gordonii (strain Challis / ATCC 35105 / BCRC 15272 / CH1 / DL1 / V288)).